Consider the following 73-residue polypeptide: Translation initiation factor IF-1 (73 aa).

Positions 1–72 constitute an S1-like domain; that stretch reads MSKKDVIELE…SRGRIVYRKK (72 aa).

It belongs to the IF-1 family. As to quaternary structure, component of the 30S ribosomal translation pre-initiation complex which assembles on the 30S ribosome in the order IF-2 and IF-3, IF-1 and N-formylmethionyl-tRNA(fMet); mRNA recruitment can occur at any time during PIC assembly.

It is found in the cytoplasm. Its function is as follows. One of the essential components for the initiation of protein synthesis. Stabilizes the binding of IF-2 and IF-3 on the 30S subunit to which N-formylmethionyl-tRNA(fMet) subsequently binds. Helps modulate mRNA selection, yielding the 30S pre-initiation complex (PIC). Upon addition of the 50S ribosomal subunit IF-1, IF-2 and IF-3 are released leaving the mature 70S translation initiation complex. This chain is Translation initiation factor IF-1, found in Fusobacterium nucleatum subsp. nucleatum (strain ATCC 25586 / DSM 15643 / BCRC 10681 / CIP 101130 / JCM 8532 / KCTC 2640 / LMG 13131 / VPI 4355).